Here is a 90-residue protein sequence, read N- to C-terminus: Antitoxin VapB35 (90 aa).

The segment at 53–90 is disordered; the sequence is GSVQPARVHGPAPRPTIPMRGGLDSGTLLERMRAEERY.

The protein belongs to the phD/YefM antitoxin family.

In terms of biological role, antitoxin component of a type II toxin-antitoxin (TA) system. Neutralizes the effect of cognate toxin VapC35. The protein is Antitoxin VapB35 (vapB35) of Mycobacterium tuberculosis (strain CDC 1551 / Oshkosh).